Reading from the N-terminus, the 268-residue chain is Nickel import ATP-binding protein NikE (268 aa).

An ABC transporter domain is found at 4–252 (LNVSDLSHHY…SSDAGRVLQN (249 aa)). An ATP-binding site is contributed by 45–52 (GRSGCGKS).

It belongs to the ABC transporter superfamily. Nickel importer (TC 3.A.1.5.3) family. As to quaternary structure, the complex is composed of two ATP-binding proteins (NikD and NikE), two transmembrane proteins (NikB and NikC) and a solute-binding protein (NikA).

It is found in the cell inner membrane. It catalyses the reaction Ni(2+)(out) + ATP + H2O = Ni(2+)(in) + ADP + phosphate + H(+). Its function is as follows. Part of the ABC transporter complex NikABCDE involved in nickel import. Responsible for energy coupling to the transport system. This is Nickel import ATP-binding protein NikE from Shigella dysenteriae serotype 1 (strain Sd197).